Here is a 693-residue protein sequence, read N- to C-terminus: tRNA (guanine(27)-N(2))-dimethyltransferase (693 aa).

The Nucleolar localization signal signature appears at 95–99; it reads HKLRR. A C2H2-type zinc finger spans residues 144–166; that stretch reads YHCIICSATITRRTDMLGHVRRH. In terms of domain architecture, Trm1 methyltransferase spans 187–648; that stretch reads EILKEADTDV…APLMQFKSIL (462 aa). S-adenosyl-L-methionine contacts are provided by R220, D267, D317, and A318. Residues C448, C451, C473, and C475 each coordinate Zn(2+). Residue K545 forms a Glycyl lysine isopeptide (Lys-Gly) (interchain with G-Cter in SUMO2) linkage. 2 positions are modified to phosphoserine: S572 and S667.

This sequence belongs to the class I-like SAM-binding methyltransferase superfamily. Trm1 family.

Its subcellular location is the nucleus. The protein localises to the nucleolus. The enzyme catalyses guanosine(27) in tRNA(Tyr) + 2 S-adenosyl-L-methionine = N(2)-dimethylguanosine(27) in tRNA(Tyr) + 2 S-adenosyl-L-homocysteine + 2 H(+). Functionally, specifically dimethylates a single guanine residue at position 27 of tRNA(Tyr) using S-adenosyl-L-methionine as donor of the methyl groups. Dimethylation at position 27 of tRNA(Tyr) is required for efficient translation of tyrosine codons. Also required to maintain 3-(3-amino-3-carboxypropyl)uridine (acp3U) in the D-loop of several cytoplasmic tRNAs. In Macaca fascicularis (Crab-eating macaque), this protein is tRNA (guanine(27)-N(2))-dimethyltransferase (TRMT1L).